A 265-amino-acid polypeptide reads, in one-letter code: MNLTAYRDLSPAALRERIRQGEFDGPTAGLANGYAQANLMIVRRELAYDFLLFCQRNPKPCPLLDVTDPGSFEPRHAAPGADIRTDFPRYRIYRNGELDQEVQDITPFWEDDMVAFLIGCSFSFEAALLANGVPVRHIEDGHNVPMYRTNIACQPAGGLSGPMVVSMRPMPANKVVRAVQVTSRFPSVHGAPVHVGDPRLLGIADLAKPDFGEPSELREGEVPVFWACGVTPQAVAMQARPELVITHAPGHMFITDLRDEQLGVI.

It belongs to the D-glutamate cyclase family.

The chain is Putative hydro-lyase PST_2764 from Stutzerimonas stutzeri (strain A1501) (Pseudomonas stutzeri).